The following is a 1843-amino-acid chain: Cilia- and flagella-associated protein 44 (1843 aa).

The disordered stretch occupies residues 1–86 (MKEPDDQDTS…PPVEVKEEPE (86 aa)). Residues 29–39 (LKSSQDTTADS) show a composition bias toward polar residues. The segment covering 41–58 (TDGEESYLGDDLDLDDMD) has biased composition (acidic residues). WD repeat units follow at residues 214–255 (GAEK…PILR), 258–297 (AFSQ…TGLK), 308–346 (TSTS…VELC), 353–390 (CHSG…TADV), 456–495 (FHSG…PLVH), 497–541 (KFKQ…GLTV), and 561–600 (PHTD…KPIG). A disordered region spans residues 701 to 726 (REAFGEEEIPEEETSEEGEEEEPPLP). The span at 705-724 (GEEEIPEEETSEEGEEEEPP) shows a compositional bias: acidic residues. 2 WD repeats span residues 790 to 829 (TEDN…PFLV) and 842 to 881 (NNYG…IVPK). Disordered stretches follow at residues 1040 to 1086 (YSKL…SVLE), 1266 to 1291 (QRKQ…SAGG), and 1488 to 1524 (KEVE…DDVF). Residues 1047–1071 (SQSERRQSKMERLEKEGPGKKESQR) are compositionally biased toward basic and acidic residues. Position 1069 is a phosphoserine (Ser1069). Positions 1072-1081 (DTGGSISLQE) are enriched in polar residues. Positions 1492 to 1524 (GDADEDEESEESSEEESSLESDEDASGSEDDVF) are enriched in acidic residues. Coiled coils occupy residues 1548–1603 (RLDI…RLNE) and 1631–1665 (LVFS…CRER). A WD 10 repeat occupies 1699 to 1744 (IDLEALQTLSVNTTLEELKIKKLRKELSNAKELRMWEEKIAQVRWD).

It belongs to the CFAP44 family. In terms of tissue distribution, expressed in testis.

Its subcellular location is the cell projection. It localises to the cilium. The protein resides in the flagellum. The protein localises to the cytoplasm. It is found in the cytoskeleton. Its subcellular location is the flagellum axoneme. Flagellar protein involved in sperm flagellum axoneme organization and function. The polypeptide is Cilia- and flagella-associated protein 44 (Mus musculus (Mouse)).